Reading from the N-terminus, the 201-residue chain is Small ribosomal subunit protein uS4 (201 aa).

The segment at 1–38 is disordered; it reads MARYTGPATRKSRRLGVDLVGGDQSFEKRPYPPGQHGR. Residues 91 to 157 form the S4 RNA-binding domain; that stretch reads SRLDNVVYRA…DPFVIARETA (67 aa).

Belongs to the universal ribosomal protein uS4 family. Part of the 30S ribosomal subunit. Contacts protein S5. The interaction surface between S4 and S5 is involved in control of translational fidelity.

One of the primary rRNA binding proteins, it binds directly to 16S rRNA where it nucleates assembly of the body of the 30S subunit. Its function is as follows. With S5 and S12 plays an important role in translational accuracy. The protein is Small ribosomal subunit protein uS4 of Mycobacterium sp. (strain JLS).